A 287-amino-acid polypeptide reads, in one-letter code: Phosphatidylserine decarboxylase proenzyme (287 aa).

Active-site charge relay system; for autoendoproteolytic cleavage activity residues include Asp-90, His-147, and Ser-253. Residue Ser-253 is the Schiff-base intermediate with substrate; via pyruvic acid; for decarboxylase activity of the active site. Ser-253 is modified (pyruvic acid (Ser); by autocatalysis).

The protein belongs to the phosphatidylserine decarboxylase family. PSD-B subfamily. Prokaryotic type I sub-subfamily. In terms of assembly, heterodimer of a large membrane-associated beta subunit and a small pyruvoyl-containing alpha subunit. The cofactor is pyruvate. In terms of processing, is synthesized initially as an inactive proenzyme. Formation of the active enzyme involves a self-maturation process in which the active site pyruvoyl group is generated from an internal serine residue via an autocatalytic post-translational modification. Two non-identical subunits are generated from the proenzyme in this reaction, and the pyruvate is formed at the N-terminus of the alpha chain, which is derived from the carboxyl end of the proenzyme. The autoendoproteolytic cleavage occurs by a canonical serine protease mechanism, in which the side chain hydroxyl group of the serine supplies its oxygen atom to form the C-terminus of the beta chain, while the remainder of the serine residue undergoes an oxidative deamination to produce ammonia and the pyruvoyl prosthetic group on the alpha chain. During this reaction, the Ser that is part of the protease active site of the proenzyme becomes the pyruvoyl prosthetic group, which constitutes an essential element of the active site of the mature decarboxylase.

The protein resides in the cell membrane. It carries out the reaction a 1,2-diacyl-sn-glycero-3-phospho-L-serine + H(+) = a 1,2-diacyl-sn-glycero-3-phosphoethanolamine + CO2. Its pathway is phospholipid metabolism; phosphatidylethanolamine biosynthesis; phosphatidylethanolamine from CDP-diacylglycerol: step 2/2. Functionally, catalyzes the formation of phosphatidylethanolamine (PtdEtn) from phosphatidylserine (PtdSer). This chain is Phosphatidylserine decarboxylase proenzyme, found in Aliivibrio salmonicida (strain LFI1238) (Vibrio salmonicida (strain LFI1238)).